Consider the following 77-residue polypeptide: Probable Fe(2+)-trafficking protein (77 aa).

Belongs to the Fe(2+)-trafficking protein family. As to quaternary structure, monomer.

Its function is as follows. Could be a mediator in iron transactions between iron acquisition and iron-requiring processes, such as synthesis and/or repair of Fe-S clusters in biosynthetic enzymes. The chain is Probable Fe(2+)-trafficking protein from Buchnera aphidicola subsp. Acyrthosiphon pisum (strain APS) (Acyrthosiphon pisum symbiotic bacterium).